Here is a 201-residue protein sequence, read N- to C-terminus: Small ribosomal subunit protein uS4 (201 aa).

Residues 91-157 form the S4 RNA-binding domain; the sequence is SRLDNVIYRA…VPFQIARETV (67 aa).

Belongs to the universal ribosomal protein uS4 family. Part of the 30S ribosomal subunit. Contacts protein S5. The interaction surface between S4 and S5 is involved in control of translational fidelity.

Functionally, one of the primary rRNA binding proteins, it binds directly to 16S rRNA where it nucleates assembly of the body of the 30S subunit. Its function is as follows. With S5 and S12 plays an important role in translational accuracy. In Mycobacterium leprae (strain Br4923), this protein is Small ribosomal subunit protein uS4.